The sequence spans 1552 residues: Nonribosomal peptide synthetase acrB (1552 aa).

Positions 129 to 564 are condensation; that stretch reads ASFAQERIWF…PVANLAIFDE (436 aa). The tract at residues 594–999 is adenylation; the sequence is RHCKAHPRDV…RMEGSAQVKI (406 aa). The 77-residue stretch at 1110-1186 folds into the Carrier domain; it reads APLGVEEEVM…AMARLLQPQE (77 aa). Position 1146 is an O-(pantetheine 4'-phosphoryl)serine (Ser1146). The tract at residues 1226–1464 is thiolester reductase (R) domain; it reads LTGATGFLGR…DFVGVDAVAS (239 aa).

The protein belongs to the NRP synthetase family.

It functions in the pathway secondary metabolite biosynthesis. Functionally, nonribosomal peptide synthetase; part of the cluster that mediates the biosynthesis of acurin A, a highly reduced polyketide coupled to a serine via a peptide bond. The activities of the highly reducing polyketide synthase acrA and the nonribosomal peptide synthetase acrB are collectively responsible for the synthesis of the acurin A core structure with a heptaketide backbone produced by acrA covalently fused to a L-serine by acrB. After the formation of the PK-NRP hybrid product, it is detached from acrB by reductive release to set up the formation of the lactam ring by aldol condensation. The hydrolyase acrC then catalyzes water loss to generate a double bond in the ring. This double bond is probably reduced, which is followed by three oxidations at C-22 to generate the carboxylic acid moiety, involving probably the FAD-binding monooxygenase acrE and the cytochrome P450 monooxygenases acrD and acrF. Finally, a last methylation step performed by the O-methyltransferase acrG leads to the production of acurin A. The sequence is that of Nonribosomal peptide synthetase acrB from Aspergillus aculeatus (strain ATCC 16872 / CBS 172.66 / WB 5094).